Consider the following 147-residue polypeptide: Small ribosomal subunit protein uS12 (147 aa).

Residues 1 to 22 are disordered; it reads MPTINQLVRKPRKSKIEKSDSP. Residue D102 is modified to 3-methylthioaspartic acid.

This sequence belongs to the universal ribosomal protein uS12 family. Part of the 30S ribosomal subunit. Contacts proteins S8 and S17. May interact with IF1 in the 30S initiation complex.

In terms of biological role, with S4 and S5 plays an important role in translational accuracy. Interacts with and stabilizes bases of the 16S rRNA that are involved in tRNA selection in the A site and with the mRNA backbone. Located at the interface of the 30S and 50S subunits, it traverses the body of the 30S subunit contacting proteins on the other side and probably holding the rRNA structure together. The combined cluster of proteins S8, S12 and S17 appears to hold together the shoulder and platform of the 30S subunit. In Streptococcus pyogenes serotype M12 (strain MGAS2096), this protein is Small ribosomal subunit protein uS12.